Consider the following 133-residue polypeptide: ATP synthase epsilon chain (133 aa).

It belongs to the ATPase epsilon chain family. In terms of assembly, F-type ATPases have 2 components, CF(1) - the catalytic core - and CF(0) - the membrane proton channel. CF(1) has five subunits: alpha(3), beta(3), gamma(1), delta(1), epsilon(1). CF(0) has three main subunits: a, b and c.

It localises to the cell membrane. In terms of biological role, produces ATP from ADP in the presence of a proton gradient across the membrane. The polypeptide is ATP synthase epsilon chain (Halalkalibacterium halodurans (strain ATCC BAA-125 / DSM 18197 / FERM 7344 / JCM 9153 / C-125) (Bacillus halodurans)).